The following is a 396-amino-acid chain: NADH-quinone oxidoreductase subunit D (396 aa).

It belongs to the complex I 49 kDa subunit family. In terms of assembly, NDH-1 is composed of 14 different subunits. Subunits NuoB, C, D, E, F, and G constitute the peripheral sector of the complex.

The protein localises to the cell inner membrane. It carries out the reaction a quinone + NADH + 5 H(+)(in) = a quinol + NAD(+) + 4 H(+)(out). NDH-1 shuttles electrons from NADH, via FMN and iron-sulfur (Fe-S) centers, to quinones in the respiratory chain. The immediate electron acceptor for the enzyme in this species is believed to be ubiquinone. Couples the redox reaction to proton translocation (for every two electrons transferred, four hydrogen ions are translocated across the cytoplasmic membrane), and thus conserves the redox energy in a proton gradient. The chain is NADH-quinone oxidoreductase subunit D from Orientia tsutsugamushi (strain Ikeda) (Rickettsia tsutsugamushi).